Consider the following 980-residue polypeptide: Glutamate receptor ionotropic, kainate 5 (980 aa).

Residues 1–14 form the signal peptide; it reads MPAELLLLLIVAFA. The Extracellular portion of the chain corresponds to 15 to 544; sequence SPSCQVLSSL…YFSFLDPFSP (530 aa). 3 disulfide bridges follow: cysteine 36–cysteine 292, cysteine 83–cysteine 334, and cysteine 165–cysteine 170. Asparagine 219, asparagine 271, asparagine 285, asparagine 322, asparagine 372, asparagine 394, asparagine 400, asparagine 407, asparagine 414, and asparagine 478 each carry an N-linked (GlcNAc...) asparagine glycan. Residues 545 to 565 form a helical membrane-spanning segment; sequence AVWLFMLLAYLAVSCVLFLAA. The Cytoplasmic segment spans residues 566 to 622; that stretch reads RLSPYEWYNPHPCLRARPHILENQYTLGNSLWFPVGGFMQQGSEIMPRALSTRCVSG. Residues 623–643 form a helical membrane-spanning segment; that stretch reads VWWAFTLIIISSYTANLAAFL. Residues 644-803 lie on the Extracellular side of the membrane; that stretch reads TVQRMEVPVE…HRAKGLGMEN (160 aa). Asparagine 735 is a glycosylation site (N-linked (GlcNAc...) asparagine). The helical transmembrane segment at 804–824 threads the bilayer; the sequence is IGGIFIVLICGLIIAVFVAVM. The Cytoplasmic segment spans residues 825 to 980; that stretch reads EFIWSTRRSA…AGPRELAEHE (156 aa). Disordered stretches follow at residues 891–927 and 944–980; these read YSAG…PTPC and ASGA…AEHE. The segment covering 894–903 has biased composition (gly residues); that stretch reads GAGGDAGSAH.

It belongs to the glutamate-gated ion channel (TC 1.A.10.1) family. GRIK5 subfamily. Homotetramer. Heterotetramer with GRIK2. Can form functional heteromeric receptors with GRIK1 and GRIK2. Can form functional heteromeric receptors with GRIK3.

It localises to the cell membrane. Its subcellular location is the postsynaptic cell membrane. It is found in the presynaptic cell membrane. Functionally, ionotropic glutamate receptor that functions as a cation-permeable ligand-gated ion channel, gated by L-glutamate and the glutamatergic agonist kainic acid. Cannot form functional channels on its own and produces channel activity only in heteromeric assembly with GRIK1 and GRIK2 subunits. Can form functional heteromeric receptors with GRIK3. In Homo sapiens (Human), this protein is Glutamate receptor ionotropic, kainate 5 (GRIK5).